A 275-amino-acid chain; its full sequence is Formamidopyrimidine-DNA glycosylase (275 aa).

Pro2 functions as the Schiff-base intermediate with DNA in the catalytic mechanism. Glu3 acts as the Proton donor in catalysis. Lys58 (proton donor; for beta-elimination activity) is an active-site residue. Residues His91, Arg109, and Arg154 each coordinate DNA. The FPG-type zinc-finger motif lies at 240 to 274 (AVYERAGLPCRVCGTPIRRLVQGQRATYYCPSCQK). The active-site Proton donor; for delta-elimination activity is Arg264.

The protein belongs to the FPG family. In terms of assembly, monomer. Zn(2+) is required as a cofactor.

The catalysed reaction is Hydrolysis of DNA containing ring-opened 7-methylguanine residues, releasing 2,6-diamino-4-hydroxy-5-(N-methyl)formamidopyrimidine.. It carries out the reaction 2'-deoxyribonucleotide-(2'-deoxyribose 5'-phosphate)-2'-deoxyribonucleotide-DNA = a 3'-end 2'-deoxyribonucleotide-(2,3-dehydro-2,3-deoxyribose 5'-phosphate)-DNA + a 5'-end 5'-phospho-2'-deoxyribonucleoside-DNA + H(+). Functionally, involved in base excision repair of DNA damaged by oxidation or by mutagenic agents. Acts as a DNA glycosylase that recognizes and removes damaged bases. Has a preference for oxidized purines, such as 7,8-dihydro-8-oxoguanine (8-oxoG). Has AP (apurinic/apyrimidinic) lyase activity and introduces nicks in the DNA strand. Cleaves the DNA backbone by beta-delta elimination to generate a single-strand break at the site of the removed base with both 3'- and 5'-phosphates. In Bordetella petrii (strain ATCC BAA-461 / DSM 12804 / CCUG 43448), this protein is Formamidopyrimidine-DNA glycosylase.